The following is a 472-amino-acid chain: NALCN channel auxiliary factor 2 (472 aa).

A helical membrane pass occupies residues 47–67; sequence LASLLFFTVLLADHLWLCAGA. The tract at residues 77–114 is disordered; the sequence is AMRPPWGAGRERQPVPPRAVLPLPPPPPGEPSAPPGTC. The segment covering 90–110 has biased composition (pro residues); sequence PVPPRAVLPLPPPPPGEPSAP. N-linked (GlcNAc...) asparagine glycosylation is found at N120 and N193. Residues 433-453 form a helical membrane-spanning segment; it reads LCVLVLMLLHTVVSFSSNQGG.

The protein belongs to the NALF family.

Its subcellular location is the membrane. Probable component of the NALCN channel complex, a channel that regulates the resting membrane potential and controls neuronal excitability. This chain is NALCN channel auxiliary factor 2, found in Homo sapiens (Human).